Here is a 472-residue protein sequence, read N- to C-terminus: Argininosuccinate lyase (472 aa).

This sequence belongs to the lyase 1 family. Argininosuccinate lyase subfamily.

It localises to the cytoplasm. It carries out the reaction 2-(N(omega)-L-arginino)succinate = fumarate + L-arginine. It functions in the pathway amino-acid biosynthesis; L-arginine biosynthesis; L-arginine from L-ornithine and carbamoyl phosphate: step 3/3. This chain is Argininosuccinate lyase, found in Synechococcus sp. (strain CC9902).